The following is a 120-amino-acid chain: UPF0231 protein YE0706 (120 aa).

This sequence belongs to the UPF0231 family.

The polypeptide is UPF0231 protein YE0706 (Yersinia enterocolitica serotype O:8 / biotype 1B (strain NCTC 13174 / 8081)).